The sequence spans 2027 residues: Dedicator of cytokinesis protein 3 (2027 aa).

The SH3 domain maps to 6 to 67 (EEEKYGVVIC…PANYIHLKKA (62 aa)). The region spanning 421–598 (RNDLYLTLEK…ESFFISTQLS (178 aa)) is the C2 DOCK-type domain. The 408-residue stretch at 1225-1632 (KSEINKEEMY…LYHEFPGLDK (408 aa)) folds into the DOCKER domain. Phosphoserine is present on Ser-1655. Disordered stretches follow at residues 1672–1695 (GTGR…MMMM), 1731–1768 (SSSQ…SLPD), 1846–1925 (DTPP…DEGL), and 1971–2027 (PPKP…RGEQ). Composition is skewed to low complexity over residues 1676-1695 (HSSS…MMMM) and 1731-1751 (SSSQ…APSQ). The span at 1752 to 1763 (MITSAPSSTRGS) shows a compositional bias: polar residues. Low complexity predominate over residues 1877–1899 (GSNSTLSGSASSGVSSLSESNFG). Positions 1967–1973 (PPALPPK) match the SH3-binding motif. Basic and acidic residues-rich tracts occupy residues 1981–1998 (ALEH…ERPR) and 2011–2027 (VKEE…RGEQ).

Belongs to the DOCK family. Interacts with presenilin proteins PSEN1 and PSEN2. Interacts with CRK. In terms of tissue distribution, expressed in brain, spinal cord, pituitary gland, testis. Not expressed in heart, liver, kidney, spleen and lung. In brain, it is highly expressed in the cerebral cortex and hippocampus, while it is absent in other tissues, except in spinal cord. In the cerebral cortex, it is found within the intermediate (III and IV) and deep (V and VI) layers, whereas it is weakly expressed in superficial layer I. It is also abundant in the piriform cortex. Within the hippocampus, it is expressed in the pyramidal neurons of the CA1, CA2, and CA3 regions and the dentate gyrus.

It is found in the cytoplasm. Potential guanine nucleotide exchange factor (GEF). GEF proteins activate some small GTPases by exchanging bound GDP for free GTP. Its interaction with presenilin proteins as well as its ability to stimulate Tau/MAPT phosphorylation suggest that it may be involved in Alzheimer disease. Ectopic expression in nerve cells decreases the secretion of amyloid-beta APBA1 protein and lowers the rate of cell-substratum adhesion, suggesting that it may affect the function of some small GTPase involved in the regulation of actin cytoskeleton or cell adhesion receptors. The protein is Dedicator of cytokinesis protein 3 (Dock3) of Mus musculus (Mouse).